The sequence spans 369 residues: Short chain dehydrogenase rstn4 (369 aa).

Residues K88, D111, N138, Y234, and K238 each contribute to the NADP(+) site. Catalysis depends on Y234, which acts as the Proton donor. K238 functions as the Lowers pKa of active site Tyr in the catalytic mechanism.

It belongs to the short-chain dehydrogenases/reductases (SDR) family.

It functions in the pathway antifungal biosynthesis. Functionally, short chain dehydrogenase; part of the gene cluster that mediates the biosynthesis of the tetrahydropyranyl antifungal agent restricticin that acts as an inhibitor of CYP51 and blocks the ergosterol biosynthesis. The highly reducing polyketide synthase rstn3, the short chain dehydrogenase rstn4, the cyclase rstn5, the FAD-dependent monooxygenase rstn6 and the enoylreductase rstn7 are required to generate the first stable intermediate desmethylrestrictinol. Rstn3 with rstn7 biosynthesize the first polyketide chain intermediate that is reduced by rstn4, followed by epoxidation by rstn6 before 6-endo cyclization via epoxide opening by rstn5 leads to desmethylrestrictinol. The methyltransferase rstn1 then catalyzes the C4 O-methylation of desmethylrestrictinol to produce restrictinol, and the nonribosomal peptide synthetase rstn8 catalyzes the C3 esterification of restrictinol with glycine that leads to restricticin. This Aspergillus nomiae NRRL (strain ATCC 15546 / NRRL 13137 / CBS 260.88 / M93) protein is Short chain dehydrogenase rstn4.